A 125-amino-acid chain; its full sequence is Large ribosomal subunit protein bL12 (125 aa).

This sequence belongs to the bacterial ribosomal protein bL12 family. Homodimer. Part of the ribosomal stalk of the 50S ribosomal subunit. Forms a multimeric L10(L12)X complex, where L10 forms an elongated spine to which 2 to 4 L12 dimers bind in a sequential fashion. Binds GTP-bound translation factors.

In terms of biological role, forms part of the ribosomal stalk which helps the ribosome interact with GTP-bound translation factors. Is thus essential for accurate translation. The polypeptide is Large ribosomal subunit protein bL12 (Helicobacter pylori (strain ATCC 700392 / 26695) (Campylobacter pylori)).